The chain runs to 541 residues: Chaperonin GroEL 2 (541 aa).

Residues 29 to 32, 86 to 90, glycine 413, 476 to 478, and aspartate 492 contribute to the ATP site; these read TLGP, DGTTT, and NAA.

Belongs to the chaperonin (HSP60) family. In terms of assembly, forms a cylinder of 14 subunits composed of two heptameric rings stacked back-to-back. Interacts with the co-chaperonin GroES.

It is found in the secreted. Its subcellular location is the capsule. It localises to the cell surface. The protein resides in the cell wall. The catalysed reaction is ATP + H2O + a folded polypeptide = ADP + phosphate + an unfolded polypeptide.. Its function is as follows. Together with its co-chaperonin GroES, plays an essential role in assisting protein folding. The GroEL-GroES system forms a nano-cage that allows encapsulation of the non-native substrate proteins and provides a physical environment optimized to promote and accelerate protein folding. The chain is Chaperonin GroEL 2 from Mycobacterium avium (strain 104).